Here is a 28-residue protein sequence, read N- to C-terminus: Cruzioseptin-10 (28 aa).

In terms of tissue distribution, expressed by the skin glands.

It is found in the secreted. In terms of biological role, has antimicrobial activity. This Cruziohyla calcarifer (Splendid leaf frog) protein is Cruzioseptin-10.